The chain runs to 329 residues: METLFSGIQPSGIPTIGNYIGALKQFVDVQNDYDCYFCIVDQHAITMPQDRLKLRKQTRQLAAIYLASGIDPDKATLFIQSEVPAHVQAGWMLTTIASVGELERMTQYKDKAQKAVEGIPAGLLTYPPLMAADIVLYNTNIVPVGDDQKQHIELTRNLVDRFNSRYNDVLVKPEIRMPKVGGRVMSLQDPTRKMSKSDDNAKNFISLLDEPNVAAKKIKSAVTDSDGIIKFDRDNKPGITNLISIYAGLTDMPIKDIEAKYEGEGYGKFKGDLAEIVKAFLVEFQEKYESFYNSDKLDDILDQGRDKAHKVSFKTVKKMEKAMGLGRKR.

Residues 9–11 (QPS) and 17–18 (GN) each bind ATP. Positions 10 to 18 (PSGIPTIGN) match the 'HIGH' region motif. Aspartate 133 is an L-tryptophan binding site. Residues 145-147 (GDD), valine 184, and 193-197 (KMSKS) contribute to the ATP site. The short motif at 193–197 (KMSKS) is the 'KMSKS' region element.

Belongs to the class-I aminoacyl-tRNA synthetase family. In terms of assembly, homodimer.

The protein localises to the cytoplasm. It catalyses the reaction tRNA(Trp) + L-tryptophan + ATP = L-tryptophyl-tRNA(Trp) + AMP + diphosphate + H(+). Its function is as follows. Catalyzes the attachment of tryptophan to tRNA(Trp). The protein is Tryptophan--tRNA ligase of Staphylococcus aureus (strain MSSA476).